We begin with the raw amino-acid sequence, 329 residues long: Glycerol-3-phosphate dehydrogenase [NAD(P)+] (329 aa).

Residues tryptophan 11, arginine 30, and lysine 103 each contribute to the NADPH site. Sn-glycerol 3-phosphate-binding residues include lysine 103, glycine 132, and serine 134. Alanine 136 lines the NADPH pocket. Positions 187, 240, 250, 251, and 252 each coordinate sn-glycerol 3-phosphate. Lysine 187 (proton acceptor) is an active-site residue. Position 251 (arginine 251) interacts with NADPH. The NADPH site is built by valine 275 and glutamate 277.

It belongs to the NAD-dependent glycerol-3-phosphate dehydrogenase family.

Its subcellular location is the cytoplasm. The catalysed reaction is sn-glycerol 3-phosphate + NAD(+) = dihydroxyacetone phosphate + NADH + H(+). It catalyses the reaction sn-glycerol 3-phosphate + NADP(+) = dihydroxyacetone phosphate + NADPH + H(+). Its pathway is membrane lipid metabolism; glycerophospholipid metabolism. Its function is as follows. Catalyzes the reduction of the glycolytic intermediate dihydroxyacetone phosphate (DHAP) to sn-glycerol 3-phosphate (G3P), the key precursor for phospholipid synthesis. The polypeptide is Glycerol-3-phosphate dehydrogenase [NAD(P)+] (Nitrosomonas europaea (strain ATCC 19718 / CIP 103999 / KCTC 2705 / NBRC 14298)).